The chain runs to 126 residues: Aspartate 1-decarboxylase (126 aa).

Residue serine 25 is the Schiff-base intermediate with substrate; via pyruvic acid of the active site. Residue serine 25 is modified to Pyruvic acid (Ser). Threonine 57 lines the substrate pocket. Tyrosine 58 acts as the Proton donor in catalysis. 73–75 lines the substrate pocket; the sequence is GAA.

It belongs to the PanD family. In terms of assembly, heterooctamer of four alpha and four beta subunits. The cofactor is pyruvate. In terms of processing, is synthesized initially as an inactive proenzyme, which is activated by self-cleavage at a specific serine bond to produce a beta-subunit with a hydroxyl group at its C-terminus and an alpha-subunit with a pyruvoyl group at its N-terminus.

It localises to the cytoplasm. The enzyme catalyses L-aspartate + H(+) = beta-alanine + CO2. The protein operates within cofactor biosynthesis; (R)-pantothenate biosynthesis; beta-alanine from L-aspartate: step 1/1. In terms of biological role, catalyzes the pyruvoyl-dependent decarboxylation of aspartate to produce beta-alanine. This is Aspartate 1-decarboxylase from Alcanivorax borkumensis (strain ATCC 700651 / DSM 11573 / NCIMB 13689 / SK2).